A 350-amino-acid chain; its full sequence is Zinc finger protein 367 (350 aa).

Residues 104 to 151 are disordered; it reads SGLRGRGAPPPAASASAAASGGEDEEEASSPDSGHLKDGIRRGRPRAD. Residues 137–151 show a composition bias toward basic and acidic residues; it reads GHLKDGIRRGRPRAD. C2H2-type zinc fingers lie at residues 167–189 and 195–219; these read IRCN…KRTH and YLCD…QRLH. Residues 290–327 are disordered; that stretch reads KGKLVQKADQEQQDPLEYLQSDEEDDEKRGAQRRLQEQ. Positions 308-342 form a coiled coil; sequence LQSDEEDDEKRGAQRRLQEQRERLHGALALIELAN. S310 is subject to Phosphoserine. Residues 316-327 show a composition bias toward basic and acidic residues; sequence EKRGAQRRLQEQ.

Belongs to the krueppel C2H2-type zinc-finger protein family.

It is found in the nucleus. Transcriptional activator. Isoform 1 may be involved in transcriptional activation of erythroid genes. The sequence is that of Zinc finger protein 367 (ZNF367) from Homo sapiens (Human).